We begin with the raw amino-acid sequence, 607 residues long: Type 3 secretion system secretin (607 aa).

A signal peptide spans 1-33; that stretch reads MAPACTTAHRRRAPLAAVLMLSLLPLLSPHADA. The disordered stretch occupies residues 277–332; the sequence is ASSSDRVPVSPPLPGSGAAAAAGSPASVWPELSKGRRDESNPIDAGGGAELASDAP. Residues 291-306 are compositionally biased toward low complexity; the sequence is GSGAAAAAGSPASVWP.

This sequence belongs to the bacterial secretin family. T3SS SctC subfamily. In terms of assembly, the core secretion machinery of the T3SS is composed of approximately 20 different proteins, including cytoplasmic components, a base, an export apparatus and a needle. This subunit is part of the base, which anchors the injectisome in the bacterial cell envelope. Forms a stable homooligomeric complex.

It localises to the cell outer membrane. Functionally, component of the type III secretion system (T3SS), also called injectisome, which is used to inject bacterial effector proteins into eukaryotic host cells. Forms a ring-shaped multimeric structure with an apparent central pore in the outer membrane. Necessary for both basic pathogenicity and the induction of the hypersensitive response in resistant plants. The protein is Type 3 secretion system secretin of Xanthomonas euvesicatoria.